We begin with the raw amino-acid sequence, 476 residues long: Cysteine--tRNA ligase (476 aa).

Cys28 provides a ligand contact to Zn(2+). The 'HIGH' region motif lies at 30 to 40 (PTVYDNTHLGH). Zn(2+)-binding residues include Cys208, His233, and Glu237. Positions 265-269 (KMSKS) match the 'KMSKS' region motif. Lys268 contributes to the ATP binding site.

The protein belongs to the class-I aminoacyl-tRNA synthetase family. Requires Zn(2+) as cofactor.

The protein resides in the cytoplasm. The catalysed reaction is tRNA(Cys) + L-cysteine + ATP = L-cysteinyl-tRNA(Cys) + AMP + diphosphate. In Methanococcus maripaludis (strain DSM 14266 / JCM 13030 / NBRC 101832 / S2 / LL), this protein is Cysteine--tRNA ligase.